A 467-amino-acid chain; its full sequence is 5-phosphohydroxy-L-lysine phospho-lyase (467 aa).

At K278 the chain carries N6-(pyridoxal phosphate)lysine.

Belongs to the class-III pyridoxal-phosphate-dependent aminotransferase family. In terms of assembly, homotetramer. The cofactor is pyridoxal 5'-phosphate.

It localises to the mitochondrion. It catalyses the reaction (5R)-5-phosphooxy-L-lysine + H2O = (S)-2-amino-6-oxohexanoate + NH4(+) + phosphate. Its function is as follows. Catalyzes the pyridoxal-phosphate-dependent breakdown of 5-phosphohydroxy-L-lysine, converting it to ammonia, inorganic phosphate and 2-aminoadipate semialdehyde. The sequence is that of 5-phosphohydroxy-L-lysine phospho-lyase (Phykpl) from Mus musculus (Mouse).